A 295-amino-acid chain; its full sequence is Sulfotransferase 1 family member D1 (295 aa).

48–53 (KSGTTW) is a 3'-phosphoadenylyl sulfate binding site. Substrate-binding positions include F81 and 106 to 108 (KTH). H108 (proton acceptor) is an active-site residue. 2 residues coordinate 3'-phosphoadenylyl sulfate: R130 and S138. Residue F142 participates in substrate binding. Residues Y193, 227–232 (SSFSVM), and 257–259 (RKG) contribute to the 3'-phosphoadenylyl sulfate site.

The protein belongs to the sulfotransferase 1 family. Detected in kidney and liver. Detected in kidney collecting duct cells.

The protein localises to the cytoplasm. In terms of biological role, sulfotransferase with broad substrate specificity that utilizes 3'-phospho-5'-adenylyl sulfate (PAPS) as sulfonate donor to catalyze the sulfate conjugation of catecholamines, such as dopamine, prostaglandins, leukotriene E4, drugs and xenobiotic compounds. Has sulfotransferase activity towards p-nitrophenol, 2-naphthylamine and minoxidil (in vitro). Sulfonation increases the water solubility of most compounds, and therefore their renal excretion, but it can also result in bioactivation to form active metabolites. In Mus musculus (Mouse), this protein is Sulfotransferase 1 family member D1 (Sult1d1).